A 284-amino-acid polypeptide reads, in one-letter code: Tropomyosin (284 aa).

The stretch at 1-284 forms a coiled coil; sequence MDGIKKKMIA…DQTFAELTGY (284 aa). Residues 111 to 131 are disordered; the sequence is TKLEEASKTAEESERGRKDLE.

Belongs to the tropomyosin family. Homodimer.

Tropomyosin, in association with the troponin complex, plays a central role in the calcium dependent regulation of muscle contraction. In Schistosoma haematobium (Blood fluke), this protein is Tropomyosin.